The sequence spans 334 residues: Malate dehydrogenase, cytoplasmic (334 aa).

11-17 contributes to the NAD(+) binding site; it reads GAAGQIA. Arginine 92 and arginine 98 together coordinate substrate. NAD(+) contacts are provided by residues asparagine 105, glutamine 112, and 129 to 131; that span reads VGN. Asparagine 131 and arginine 162 together coordinate substrate. Histidine 187 functions as the Proton acceptor in the catalytic mechanism.

Belongs to the LDH/MDH superfamily. MDH type 2 family. Homodimer.

Its subcellular location is the cytoplasm. The protein localises to the cytosol. It carries out the reaction (S)-malate + NAD(+) = oxaloacetate + NADH + H(+). The catalysed reaction is (S)-2-hydroxyglutarate + NAD(+) = 2-oxoglutarate + NADH + H(+). Catalyzes the reduction of aromatic alpha-keto acids in the presence of NADH. Plays essential roles in the malate-aspartate shuttle and the tricarboxylic acid cycle, important in mitochondrial NADH supply for oxidative phosphorylation. Catalyzes the reduction of 2-oxoglutarate to 2-hydroxyglutarate, leading to elevated reactive oxygen species (ROS). The polypeptide is Malate dehydrogenase, cytoplasmic (MDH1) (Gallus gallus (Chicken)).